The sequence spans 377 residues: Uroporphyrinogen decarboxylase (377 aa).

Residues 40–44, Asp89, Tyr169, Ser224, and His354 each bind substrate; that span reads RQAGR.

The protein belongs to the uroporphyrinogen decarboxylase family. In terms of assembly, homodimer.

Its subcellular location is the cytoplasm. It carries out the reaction uroporphyrinogen III + 4 H(+) = coproporphyrinogen III + 4 CO2. It functions in the pathway porphyrin-containing compound metabolism; protoporphyrin-IX biosynthesis; coproporphyrinogen-III from 5-aminolevulinate: step 4/4. Its function is as follows. Catalyzes the decarboxylation of four acetate groups of uroporphyrinogen-III to yield coproporphyrinogen-III. The protein is Uroporphyrinogen decarboxylase of Leifsonia xyli subsp. xyli (strain CTCB07).